The primary structure comprises 143 residues: Large ribosomal subunit protein uL11 (143 aa).

It belongs to the universal ribosomal protein uL11 family. In terms of assembly, part of the ribosomal stalk of the 50S ribosomal subunit. Interacts with L10 and the large rRNA to form the base of the stalk. L10 forms an elongated spine to which L12 dimers bind in a sequential fashion forming a multimeric L10(L12)X complex. In terms of processing, one or more lysine residues are methylated.

Its function is as follows. Forms part of the ribosomal stalk which helps the ribosome interact with GTP-bound translation factors. In Polynucleobacter asymbioticus (strain DSM 18221 / CIP 109841 / QLW-P1DMWA-1) (Polynucleobacter necessarius subsp. asymbioticus), this protein is Large ribosomal subunit protein uL11.